The chain runs to 360 residues: Serine/threonine-protein phosphatase 2A activator 2 (360 aa).

Belongs to the PTPA-type PPIase family.

It localises to the cytoplasm. It catalyses the reaction [protein]-peptidylproline (omega=180) = [protein]-peptidylproline (omega=0). Functionally, PPIases accelerate the folding of proteins. It catalyzes the cis-trans isomerization of proline imidic peptide bonds in oligopeptides. Acts as a regulatory subunit for PP2A-like phosphatases modulating their activity or substrate specificity, probably by inducing a conformational change in the catalytic subunit, a direct target of the PPIase. Can reactivate inactive phosphatase PP2A-phosphatase methylesterase complexes (PP2Ai) in presence of ATP and Mg(2+) by dissociating the inactive form from the complex. In Kluyveromyces lactis (strain ATCC 8585 / CBS 2359 / DSM 70799 / NBRC 1267 / NRRL Y-1140 / WM37) (Yeast), this protein is Serine/threonine-protein phosphatase 2A activator 2 (RRD2).